The chain runs to 32 residues: Mu-theraphotoxin-Se1a (32 aa).

Intrachain disulfides connect C2–C17, C9–C22, and C16–C28.

The protein belongs to the neurotoxin 10 (Hwtx-1) family. As to expression, expressed by the venom gland.

The protein resides in the secreted. Its function is as follows. Voltage-gated sodium channel Nav1.7/SCN9A inhibitor. The chain is Mu-theraphotoxin-Se1a from Selenocosmia effera (Tarantula spider).